A 671-amino-acid polypeptide reads, in one-letter code: Annexin A6 (671 aa).

Annexin repeat units follow at residues 18 to 89, 90 to 161, 173 to 245, 249 to 320, 361 to 432, 433 to 504, 519 to 594, and 598 to 669; these read FNAS…SLMR, PPAY…VLLQ, DLVE…AVVK, STAE…KLCE, FNDD…GLML, TPAQ…SLAL, EDAK…AIVR, and NKPA…LCGG.

Belongs to the annexin family.

It localises to the cytoplasm. Its subcellular location is the melanosome. In terms of biological role, may associate with CD21. May regulate the release of Ca(2+) from intracellular stores. The sequence is that of Annexin A6 (ANXA6) from Gallus gallus (Chicken).